Consider the following 585-residue polypeptide: Isocitrate dehydrogenase kinase/phosphatase (585 aa).

ATP-binding positions include 315 to 321 and Lys-336; that span reads APGVKGM. Asp-371 is a catalytic residue.

The protein belongs to the AceK family.

Its subcellular location is the cytoplasm. The enzyme catalyses L-seryl-[isocitrate dehydrogenase] + ATP = O-phospho-L-seryl-[isocitrate dehydrogenase] + ADP + H(+). Its function is as follows. Bifunctional enzyme which can phosphorylate or dephosphorylate isocitrate dehydrogenase (IDH) on a specific serine residue. This is a regulatory mechanism which enables bacteria to bypass the Krebs cycle via the glyoxylate shunt in response to the source of carbon. When bacteria are grown on glucose, IDH is fully active and unphosphorylated, but when grown on acetate or ethanol, the activity of IDH declines drastically concomitant with its phosphorylation. This is Isocitrate dehydrogenase kinase/phosphatase from Photorhabdus laumondii subsp. laumondii (strain DSM 15139 / CIP 105565 / TT01) (Photorhabdus luminescens subsp. laumondii).